Reading from the N-terminus, the 197-residue chain is Recombination protein RecR (197 aa).

The segment at 55 to 70 adopts a C4-type zinc-finger fold; it reads CVQCRDFTESEICTIC. Residues 78-173 form the Toprim domain; it reads QQLCVVESPA…RPSRLAQGMP (96 aa).

It belongs to the RecR family.

Its function is as follows. May play a role in DNA repair. It seems to be involved in an RecBC-independent recombinational process of DNA repair. It may act with RecF and RecO. The sequence is that of Recombination protein RecR from Xanthomonas oryzae pv. oryzae (strain MAFF 311018).